Here is a 305-residue protein sequence, read N- to C-terminus: Translation initiation factor eIF2B subunit alpha (305 aa).

N-acetylserine is present on S2. T291 is modified (phosphothreonine).

This sequence belongs to the eIF-2B alpha/beta/delta subunits family. In terms of assembly, component of the translation initiation factor 2B (eIF2B) complex which is a heterodecamer of two sets of five different subunits: alpha, beta, gamma, delta and epsilon. Subunits alpha, beta and delta comprise a regulatory subcomplex and subunits epsilon and gamma comprise a catalytic subcomplex. Within the complex, the hexameric regulatory complex resides at the center, with the two heterodimeric catalytic subcomplexes bound on opposite sides.

It is found in the cytoplasm. It localises to the cytosol. In terms of biological role, acts as a component of the translation initiation factor 2B (eIF2B) complex, which catalyzes the exchange of GDP for GTP on the eukaryotic initiation factor 2 (eIF2) complex gamma subunit. Its guanine nucleotide exchange factor activity is repressed when bound to eIF2 complex phosphorylated on the alpha subunit, thereby limiting the amount of methionyl-initiator methionine tRNA available to the ribosome and consequently global translation is repressed. It activates the translation of GCN4 in response to low amino acid, carbon, or purine availability, by suppressing the inhibitory effects of multiple uORFs present in the leader of GCN4 mRNA. It may promote either repression or activation of GCN4 expression depending on amino acid availability. Modulation of GCN3 regulatory function in response to amino acid availability occurs post-translationally. This chain is Translation initiation factor eIF2B subunit alpha, found in Saccharomyces cerevisiae (strain ATCC 204508 / S288c) (Baker's yeast).